The following is a 355-amino-acid chain: N-acetyl-gamma-glutamyl-phosphate reductase (355 aa).

C152 is a catalytic residue.

The protein belongs to the NAGSA dehydrogenase family. Type 1 subfamily.

It localises to the cytoplasm. It carries out the reaction N-acetyl-L-glutamate 5-semialdehyde + phosphate + NADP(+) = N-acetyl-L-glutamyl 5-phosphate + NADPH + H(+). It functions in the pathway amino-acid biosynthesis; L-arginine biosynthesis; N(2)-acetyl-L-ornithine from L-glutamate: step 3/4. Catalyzes the NADPH-dependent reduction of N-acetyl-5-glutamyl phosphate to yield N-acetyl-L-glutamate 5-semialdehyde. This is N-acetyl-gamma-glutamyl-phosphate reductase from Psychrobacter sp. (strain PRwf-1).